The sequence spans 240 residues: Uridylate kinase (240 aa).

ATP is bound at residue 12 to 15; that stretch reads KLSG. Positions 20–25 are involved in allosteric activation by GTP; it reads GDKGFG. Gly-54 serves as a coordination point for UMP. ATP contacts are provided by Gly-55 and Arg-59. UMP contacts are provided by residues Asp-74 and 135–142; that span reads TGSPYFST. The ATP site is built by Asn-163, Tyr-169, and Asp-172.

Belongs to the UMP kinase family. In terms of assembly, homohexamer.

The protein localises to the cytoplasm. The enzyme catalyses UMP + ATP = UDP + ADP. Its pathway is pyrimidine metabolism; CTP biosynthesis via de novo pathway; UDP from UMP (UMPK route): step 1/1. Its activity is regulated as follows. Allosterically activated by GTP. Inhibited by UTP. In terms of biological role, catalyzes the reversible phosphorylation of UMP to UDP. This chain is Uridylate kinase, found in Limosilactobacillus reuteri (strain DSM 20016) (Lactobacillus reuteri).